The sequence spans 1132 residues: NUT family member 1 (1132 aa).

Disordered stretches follow at residues 1–56, 337–365, 383–405, 476–584, 693–714, 873–892, and 922–1017; these read MASD…SVFS, AASK…EIPP, LATG…EGMY, EEED…VERR, RGTP…GERD, DASS…NSFS, and PLNV…DEEL. Positions 21–36 are enriched in pro residues; that stretch reads APSPSPALPFLPPTSD. The span at 337-352 shows a compositional bias: basic residues; sequence AASKTRAPRRRQRKAQ. Residues 395–404 show a composition bias toward acidic residues; sequence EGQQQEEEGM. 3 stretches are compositionally biased toward polar residues: residues 487–497, 697–706, and 883–892; these read SGAQLDSSPSG, MAQSYDQNPS, and EAGSRGNSFS. Residues 932–942 are compositionally biased toward basic and acidic residues; sequence GEGRVDPDLSK. The segment covering 950 to 971 has biased composition (polar residues); sequence QESQESYTTGTPKATSSHQGLG. Ser-1026, Ser-1029, and Ser-1031 each carry phosphoserine. A disordered region spans residues 1031 to 1132; the sequence is SPREHPLSPH…GRRKKRRRSQ (102 aa). Gln-1046 carries the post-translational modification N5-methylglutamine. Residues 1123-1132 show a composition bias toward basic residues; sequence GRRKKRRRSQ.

The protein belongs to the NUT family. Methylated at Gln-1046 by N6AMT1. Post-translationally, phosphorylation on Ser-1026, Ser-1029 or Ser-1031 is important for cytoplasmic export. In terms of tissue distribution, specifically expressed in testis.

The protein localises to the cytoplasm. Its subcellular location is the nucleus. In terms of biological role, plays a role in the regulation of proliferation. Regulates TERT expression by modulating SP1 binding to TERT promoter binding sites. The protein is NUT family member 1 of Homo sapiens (Human).